A 574-amino-acid chain; its full sequence is Phosphatidylinositol 4-kinase gamma 3 (574 aa).

Ubiquitin-like domains lie at 32–109 (PILV…SDLQ) and 110–188 (AISV…AKVR). The PI3K/PI4K catalytic domain maps to 257-555 (GNGPIRSSDG…IVPTETTEDE (299 aa)). The G-loop stretch occupies residues 263 to 269 (SSDGSGG). Residues 264 to 270 (SDGSGGA), Lys286, and 381 to 384 (QMFV) each bind ATP. The tract at residues 414 to 422 (ANADRHAGN) is catalytic loop. Residues 438–464 (PIDHGYCFPNKFEDCTFEWLYWPQAKE) are activation loop. Asp440 is an ATP binding site.

Belongs to the PI3/PI4-kinase family. Type II PI4K subfamily.

The enzyme catalyses a 1,2-diacyl-sn-glycero-3-phospho-(1D-myo-inositol) + ATP = a 1,2-diacyl-sn-glycero-3-phospho-(1D-myo-inositol 4-phosphate) + ADP + H(+). In terms of biological role, the phosphorylation of phosphatidylinositol (PI) to PI4P is the first committed step in the generation of phosphatidylinositol 4,5-bisphosphate (PIP2), a precursor of the second messenger inositol 1,4,5-trisphosphate (InsP3). This chain is Phosphatidylinositol 4-kinase gamma 3 (PI4KG3), found in Arabidopsis thaliana (Mouse-ear cress).